The following is a 317-amino-acid chain: Transaldolase (317 aa).

The active-site Schiff-base intermediate with substrate is the lysine 126.

This sequence belongs to the transaldolase family. Type 1 subfamily. Homodimer.

Its subcellular location is the cytoplasm. It catalyses the reaction D-sedoheptulose 7-phosphate + D-glyceraldehyde 3-phosphate = D-erythrose 4-phosphate + beta-D-fructose 6-phosphate. The protein operates within carbohydrate degradation; pentose phosphate pathway; D-glyceraldehyde 3-phosphate and beta-D-fructose 6-phosphate from D-ribose 5-phosphate and D-xylulose 5-phosphate (non-oxidative stage): step 2/3. Transaldolase is important for the balance of metabolites in the pentose-phosphate pathway. In Burkholderia thailandensis (strain ATCC 700388 / DSM 13276 / CCUG 48851 / CIP 106301 / E264), this protein is Transaldolase.